The primary structure comprises 391 residues: Alkanesulfonate monooxygenase (391 aa).

It belongs to the SsuD family.

The catalysed reaction is an alkanesulfonate + FMNH2 + O2 = an aldehyde + FMN + sulfite + H2O + 2 H(+). Its function is as follows. Catalyzes the desulfonation of aliphatic sulfonates. This is Alkanesulfonate monooxygenase from Methylorubrum extorquens (strain CM4 / NCIMB 13688) (Methylobacterium extorquens).